The sequence spans 659 residues: Exoribonuclease 2 (659 aa).

An RNB domain is found at 189–531; sequence RKDLTALHFV…NHRLIKACIA (343 aa). The S1 motif domain occupies 576–658; that stretch reads KPEFQAEVQD…ETRSLIGNLV (83 aa).

The protein belongs to the RNR ribonuclease family. RNase II subfamily.

It is found in the cytoplasm. It catalyses the reaction Exonucleolytic cleavage in the 3'- to 5'-direction to yield nucleoside 5'-phosphates.. Involved in mRNA degradation. Hydrolyzes single-stranded polyribonucleotides processively in the 3' to 5' direction. The protein is Exoribonuclease 2 of Actinobacillus succinogenes (strain ATCC 55618 / DSM 22257 / CCUG 43843 / 130Z).